A 141-amino-acid chain; its full sequence is Hemoglobin subunit alpha (141 aa).

Positions 1-141 (VLSPADKANI…VSTVLTSKYR (141 aa)) constitute a Globin domain. S3 carries the post-translational modification Phosphoserine. 2 positions are modified to N6-succinyllysine: K7 and K11. An N6-acetyllysine; alternate modification is found at K16. K16 bears the N6-succinyllysine; alternate mark. Position 24 is a phosphotyrosine (Y24). S35 is subject to Phosphoserine. N6-succinyllysine is present on K40. A Phosphoserine modification is found at S49. H58 provides a ligand contact to O2. H87 serves as a coordination point for heme b. A Phosphoserine modification is found at S102. T108 carries the post-translational modification Phosphothreonine. Phosphoserine is present on residues S124 and S131. T134 and T137 each carry phosphothreonine. Phosphoserine is present on S138.

Belongs to the globin family. In terms of assembly, heterotetramer of two alpha chains and two beta chains. In terms of tissue distribution, red blood cells.

Its function is as follows. Involved in oxygen transport from the lung to the various peripheral tissues. Functionally, hemopressin acts as an antagonist peptide of the cannabinoid receptor CNR1. Hemopressin-binding efficiently blocks cannabinoid receptor CNR1 and subsequent signaling. In Meles meles (Eurasian badger), this protein is Hemoglobin subunit alpha (HBA).